Consider the following 203-residue polypeptide: UDP-N-acetylglucosamine transferase subunit ALG13 (203 aa).

The protein belongs to the glycosyltransferase 28 family. As to quaternary structure, heterodimer with ALG14 to form a functional enzyme.

The protein localises to the endoplasmic reticulum. The catalysed reaction is an N-acetyl-alpha-D-glucosaminyl-diphospho-di-trans,poly-cis-dolichol + UDP-N-acetyl-alpha-D-glucosamine = an N,N'-diacetylchitobiosyl-diphospho-di-trans,poly-cis-dolichol + UDP + H(+). In terms of biological role, involved in protein N-glycosylation. Essential for the second step of the dolichol-linked oligosaccharide pathway. The chain is UDP-N-acetylglucosamine transferase subunit ALG13 (ALG13) from Eremothecium gossypii (strain ATCC 10895 / CBS 109.51 / FGSC 9923 / NRRL Y-1056) (Yeast).